A 936-amino-acid polypeptide reads, in one-letter code: Isoleucine--tRNA ligase (936 aa).

The short motif at Pro-58–Thr-68 is the 'HIGH' region element. Glu-561 contacts L-isoleucyl-5'-AMP. Residues Lys-602–Ser-606 carry the 'KMSKS' region motif. Residue Lys-605 coordinates ATP. The Zn(2+) site is built by Cys-899, Cys-902, Cys-919, and Cys-922.

The protein belongs to the class-I aminoacyl-tRNA synthetase family. IleS type 1 subfamily. Monomer. The cofactor is Zn(2+).

The protein localises to the cytoplasm. It carries out the reaction tRNA(Ile) + L-isoleucine + ATP = L-isoleucyl-tRNA(Ile) + AMP + diphosphate. In terms of biological role, catalyzes the attachment of isoleucine to tRNA(Ile). As IleRS can inadvertently accommodate and process structurally similar amino acids such as valine, to avoid such errors it has two additional distinct tRNA(Ile)-dependent editing activities. One activity is designated as 'pretransfer' editing and involves the hydrolysis of activated Val-AMP. The other activity is designated 'posttransfer' editing and involves deacylation of mischarged Val-tRNA(Ile). The sequence is that of Isoleucine--tRNA ligase from Coxiella burnetii (strain Dugway 5J108-111).